Here is a 151-residue protein sequence, read N- to C-terminus: uncharacterized protein (151 aa).

Residues Cys24, Cys27, Cys92, and Cys129 each contribute to the [4Fe-4S] cluster site.

It belongs to the complex I 20 kDa subunit family. [4Fe-4S] cluster serves as cofactor.

This is an uncharacterized protein from Methanocaldococcus jannaschii (strain ATCC 43067 / DSM 2661 / JAL-1 / JCM 10045 / NBRC 100440) (Methanococcus jannaschii).